The chain runs to 142 residues: Mini-ribonuclease 3 (142 aa).

Asp-33 is an active-site residue.

This sequence belongs to the MrnC RNase family. Homodimer. It depends on Mg(2+) as a cofactor.

It is found in the cytoplasm. In terms of biological role, involved in correct processing of both the 5' and 3' ends of 23S rRNA precursor. Processes 30S rRNA precursor transcript even in absence of ribonuclease 3 (Rnc); Rnc processes 30S rRNA into smaller rRNA precursors. This is Mini-ribonuclease 3 from Thermoanaerobacter sp. (strain X514).